Here is a 110-residue protein sequence, read N- to C-terminus: Parvalbumin alpha (110 aa).

EF-hand domains are found at residues 39-74 (KNAK…FAPE) and 78-110 (LSEK…VANS). Residues Asp52, Asp54, Ser56, Phe58, Glu60, Glu63, Asp91, Asp93, Asp95, Lys97, and Glu102 each coordinate Ca(2+).

This sequence belongs to the parvalbumin family.

In muscle, parvalbumin is thought to be involved in relaxation after contraction. It binds two calcium ions. The chain is Parvalbumin alpha from Callorhinchus milii (Ghost shark).